The following is a 328-amino-acid chain: MIERIWSGKSWLYLLLLPLSWLYGAITWLIRISYTLGLRSAWRAPVPVIIVGNLTAGGNGKTPVVIWLVEQLKQRGYRVGVVSRGYGGKSDVYPLLLSNSTTTSQAGDEPVLIYQRTAAPVAVSPKRSDAVKALLKSHDLDFIITDDGLQHYALQRDFELVVIDGVRRFGNGWWLPAGPMRERAGRLRSVDAVITNGGIAATGEIPMQLAAREAVNLVTGERCPAQQLQHVVAMAGIGHPPRFFATLNLLGIAPKKEYAFADHQDYSLAQLSSLTSGPQNLLMTEKDAVKCRVFAQPNWWYLPVDAQLPPDQAEQLLLKIQALSRCST.

55–62 (TAGGNGKT) serves as a coordination point for ATP.

Belongs to the LpxK family.

The catalysed reaction is a lipid A disaccharide + ATP = a lipid IVA + ADP + H(+). Its pathway is glycolipid biosynthesis; lipid IV(A) biosynthesis; lipid IV(A) from (3R)-3-hydroxytetradecanoyl-[acyl-carrier-protein] and UDP-N-acetyl-alpha-D-glucosamine: step 6/6. Its function is as follows. Transfers the gamma-phosphate of ATP to the 4'-position of a tetraacyldisaccharide 1-phosphate intermediate (termed DS-1-P) to form tetraacyldisaccharide 1,4'-bis-phosphate (lipid IVA). The sequence is that of Tetraacyldisaccharide 4'-kinase from Yersinia enterocolitica serotype O:8 / biotype 1B (strain NCTC 13174 / 8081).